A 447-amino-acid chain; its full sequence is GTPase Der (447 aa).

EngA-type G domains are found at residues 4–165 and 180–357; these read KIIT…SIKE and LQIV…KIWN. Residues 10 to 17, 57 to 61, 119 to 122, 186 to 193, 233 to 237, and 298 to 301 each bind GTP; these read GRPNVGKS, DTPGL, NKCE, GRPNAGKS, DTAGL, and NKWD. Residues 358–443 enclose the KH-like domain; sequence KKITTGKLNE…PIRFTYVKNK (86 aa).

The protein belongs to the TRAFAC class TrmE-Era-EngA-EngB-Septin-like GTPase superfamily. EngA (Der) GTPase family. In terms of assembly, associates with the 50S ribosomal subunit.

Its function is as follows. GTPase that plays an essential role in the late steps of ribosome biogenesis. This Rickettsia typhi (strain ATCC VR-144 / Wilmington) protein is GTPase Der.